The following is an 85-amino-acid chain: Putative membrane protein insertion efficiency factor (85 aa).

The protein belongs to the UPF0161 family.

Its subcellular location is the cell membrane. Functionally, could be involved in insertion of integral membrane proteins into the membrane. The sequence is that of Putative membrane protein insertion efficiency factor from Baumannia cicadellinicola subsp. Homalodisca coagulata.